Consider the following 427-residue polypeptide: TNF receptor-associated factor family protein DDB_G0285149 (427 aa).

The RING-type zinc finger occupies 20–65 (CIVCTDLLSESHDKIQVNQCPHGHCLCSDCWTKQIENKKKECPICR). TRAF-type zinc fingers lie at residues 122 to 178 (THFK…INKD) and 178 to 234 (DHLE…KHQA). The MATH domain maps to 284–415 (KYSNQWVIEN…GNKLTIKFEI (132 aa)).

Belongs to the TNF receptor-associated factor family. A subfamily.

It is found in the cytoplasm. Probable adapter protein and signal transducer that links members of the tumor necrosis factor receptor family to different signaling pathways by association with the receptor cytoplasmic domain and kinases. The chain is TNF receptor-associated factor family protein DDB_G0285149 from Dictyostelium discoideum (Social amoeba).